Consider the following 576-residue polypeptide: Eukaryotic translation initiation factor 3 subunit L (576 aa).

Residues 330-536 form the PCI domain; the sequence is DAIRVFANIL…IHIADTKVAR (207 aa).

The protein belongs to the eIF-3 subunit L family. As to quaternary structure, component of the eukaryotic translation initiation factor 3 (eIF-3) complex, which is composed of 13 subunits: eif3a, eif3b, eif3c, eif3d, eif3e, eif3f, eif3g, eif3h, eif3i, eif3j, eif3k, eif3l and eif3m.

It is found in the cytoplasm. Component of the eukaryotic translation initiation factor 3 (eIF-3) complex, which is involved in protein synthesis of a specialized repertoire of mRNAs and, together with other initiation factors, stimulates binding of mRNA and methionyl-tRNAi to the 40S ribosome. The eIF-3 complex specifically targets and initiates translation of a subset of mRNAs involved in cell proliferation. The protein is Eukaryotic translation initiation factor 3 subunit L (eif3l) of Danio rerio (Zebrafish).